Consider the following 203-residue polypeptide: NAD(P)H dehydrogenase (quinone) (203 aa).

One can recognise a Flavodoxin-like domain in the interval 3 to 194 (VLIVYYSLYG…DAARFQGRHI (192 aa)). Residues 9–14 (SLYGHV) and 82–84 (TRF) each bind FMN. Tyr-11 is a binding site for NAD(+). Residue Trp-102 coordinates substrate. Residues 117 to 123 (STATQHG) and His-138 each bind FMN.

It belongs to the WrbA family. FMN serves as cofactor.

The catalysed reaction is a quinone + NADH + H(+) = a quinol + NAD(+). The enzyme catalyses a quinone + NADPH + H(+) = a quinol + NADP(+). The polypeptide is NAD(P)H dehydrogenase (quinone) (Solidesulfovibrio magneticus (strain ATCC 700980 / DSM 13731 / RS-1) (Desulfovibrio magneticus)).